The following is a 130-amino-acid chain: Small ribosomal subunit protein uS9 (130 aa).

This sequence belongs to the universal ribosomal protein uS9 family.

The chain is Small ribosomal subunit protein uS9 from Streptococcus pyogenes serotype M1.